The following is a 545-amino-acid chain: Bifunctional purine biosynthesis protein PurH (545 aa).

Residues 1–150 (MTNTNRPIRR…KNHATVAIVT (150 aa)) enclose the MGS-like domain.

It belongs to the PurH family.

The enzyme catalyses (6R)-10-formyltetrahydrofolate + 5-amino-1-(5-phospho-beta-D-ribosyl)imidazole-4-carboxamide = 5-formamido-1-(5-phospho-D-ribosyl)imidazole-4-carboxamide + (6S)-5,6,7,8-tetrahydrofolate. The catalysed reaction is IMP + H2O = 5-formamido-1-(5-phospho-D-ribosyl)imidazole-4-carboxamide. It functions in the pathway purine metabolism; IMP biosynthesis via de novo pathway; 5-formamido-1-(5-phospho-D-ribosyl)imidazole-4-carboxamide from 5-amino-1-(5-phospho-D-ribosyl)imidazole-4-carboxamide (10-formyl THF route): step 1/1. It participates in purine metabolism; IMP biosynthesis via de novo pathway; IMP from 5-formamido-1-(5-phospho-D-ribosyl)imidazole-4-carboxamide: step 1/1. This chain is Bifunctional purine biosynthesis protein PurH, found in Bifidobacterium longum (strain NCC 2705).